The sequence spans 358 residues: Zinc-type alcohol dehydrogenase-like protein YogA (358 aa).

Belongs to the zinc-containing alcohol dehydrogenase family. Quinone oxidoreductase subfamily.

Its pathway is secondary metabolite biosynthesis. Functionally, zinc-type alcohol dehydrogenase-like protein; part of the gene cluster that mediates the biosynthesis of phomenoic acid, a long chain aliphatic carboxylic acid that does not appear to be essential for pathogenicity but may play a role in allowing to outcompete other fungi in the environmental niche via its antifungal properties. The polyketide synthase produces the long methylated aliphatic carboxylic acid chain of phomenoic acid. The cluster-specific cytochrome P450 monooxygenase may then hydroxylate the methyl group of carbon 31. The putative dehydrogenase YogA, which has no obvious role in phomenoic acid biosynthesis, may further modify phomenoic acid to produce a compound not identified yet. This Leptosphaeria maculans (strain JN3 / isolate v23.1.3 / race Av1-4-5-6-7-8) (Blackleg fungus) protein is Zinc-type alcohol dehydrogenase-like protein YogA.